A 163-amino-acid chain; its full sequence is Phosphopantetheine adenylyltransferase (163 aa).

Ser-9 serves as a coordination point for substrate. Residues 9–10 (SF) and His-17 each bind ATP. Residues Lys-41, Thr-73, and Arg-87 each coordinate substrate. ATP is bound by residues 88–90 (GLR), Glu-98, and 123–129 (YSFISSG).

This sequence belongs to the bacterial CoaD family. Homohexamer. Mg(2+) serves as cofactor.

The protein localises to the cytoplasm. The enzyme catalyses (R)-4'-phosphopantetheine + ATP + H(+) = 3'-dephospho-CoA + diphosphate. It participates in cofactor biosynthesis; coenzyme A biosynthesis; CoA from (R)-pantothenate: step 4/5. Functionally, reversibly transfers an adenylyl group from ATP to 4'-phosphopantetheine, yielding dephospho-CoA (dPCoA) and pyrophosphate. The sequence is that of Phosphopantetheine adenylyltransferase from Desulforudis audaxviator (strain MP104C).